The sequence spans 218 residues: Pyridoxine/pyridoxamine 5'-phosphate oxidase (218 aa).

Substrate-binding positions include arginine 14–tyrosine 17 and lysine 72. Residues arginine 67 to lysine 72, tyrosine 82 to threonine 83, arginine 88, lysine 89, and glutamine 111 contribute to the FMN site. Positions 129, 133, and 137 each coordinate substrate. FMN contacts are provided by residues glutamine 146–serine 147 and tryptophan 191. Residue arginine 197–histidine 199 coordinates substrate. FMN is bound at residue arginine 201.

This sequence belongs to the pyridoxamine 5'-phosphate oxidase family. In terms of assembly, homodimer. FMN serves as cofactor.

It catalyses the reaction pyridoxamine 5'-phosphate + O2 + H2O = pyridoxal 5'-phosphate + H2O2 + NH4(+). The catalysed reaction is pyridoxine 5'-phosphate + O2 = pyridoxal 5'-phosphate + H2O2. Its pathway is cofactor metabolism; pyridoxal 5'-phosphate salvage; pyridoxal 5'-phosphate from pyridoxamine 5'-phosphate: step 1/1. The protein operates within cofactor metabolism; pyridoxal 5'-phosphate salvage; pyridoxal 5'-phosphate from pyridoxine 5'-phosphate: step 1/1. In terms of biological role, catalyzes the oxidation of either pyridoxine 5'-phosphate (PNP) or pyridoxamine 5'-phosphate (PMP) into pyridoxal 5'-phosphate (PLP). In Escherichia coli O45:K1 (strain S88 / ExPEC), this protein is Pyridoxine/pyridoxamine 5'-phosphate oxidase.